Consider the following 213-residue polypeptide: 3,4-dihydroxy-2-butanone 4-phosphate synthase (213 aa).

D-ribulose 5-phosphate-binding positions include 37–38 (RE), aspartate 42, 150–154 (RSGHT), and glutamate 174. Residue glutamate 38 participates in Mg(2+) binding. Histidine 153 contacts Mg(2+).

Belongs to the DHBP synthase family. As to quaternary structure, homodimer. Mg(2+) serves as cofactor. Mn(2+) is required as a cofactor.

It carries out the reaction D-ribulose 5-phosphate = (2S)-2-hydroxy-3-oxobutyl phosphate + formate + H(+). Its pathway is cofactor biosynthesis; riboflavin biosynthesis; 2-hydroxy-3-oxobutyl phosphate from D-ribulose 5-phosphate: step 1/1. Catalyzes the conversion of D-ribulose 5-phosphate to formate and 3,4-dihydroxy-2-butanone 4-phosphate. The protein is 3,4-dihydroxy-2-butanone 4-phosphate synthase of Blochmanniella floridana.